The primary structure comprises 70 residues: Probable protein transport protein Sec61 subunit gamma (70 aa).

The Cytoplasmic portion of the chain corresponds to methionine 1–glutamine 39. A helical membrane pass occupies residues alanine 40 to isoleucine 58. At histidine 59 to alanine 70 the chain is on the extracellular side.

This sequence belongs to the SecE/SEC61-gamma family. Heterotrimeric complex composed of SEC61-alpha, SEC61-beta and SEC61-gamma.

Its subcellular location is the endoplasmic reticulum membrane. Functionally, necessary for protein translocation in the endoplasmic reticulum. This Neurospora crassa (strain ATCC 24698 / 74-OR23-1A / CBS 708.71 / DSM 1257 / FGSC 987) protein is Probable protein transport protein Sec61 subunit gamma.